A 327-amino-acid chain; its full sequence is MSQVSTLIDVDKPLFDLSTFAGRFQYFAWMTDPRTVVVSSDRLLEAKAMVERYRKGDQSPPLKPEEVHYNMKLYNSAFHPDTGELQNFCGRMSFQVPGGMLITGGMLAFYRTVPAVVLWQFINQSFNAVVNYTNRNANSPTSVTQLGVAYVSATTSALVAAIGCKNYWSKKATPLFQRFVPFAAVAAANFVNIPLMRQNEIINGIEVKNDDGVVVGQSRLAAIKGIGEVVVSRIAMAAPGMLVLPLIMERLEKLPAYRRIKWINAPFQTLLVGCFLCFMVPTACALFPQQCSLDTSIMRTFEPELYEDLEKKTQGKVPKRVYFNKGL.

5 helical membrane-spanning segments follow: residues 99 to 119 (GMLI…VVLW), 143 to 163 (VTQL…AAIG), 175 to 195 (LFQR…NIPL), 228 to 248 (EVVV…PLIM), and 267 to 287 (FQTL…CALF).

The protein belongs to the sideroflexin family.

The protein localises to the mitochondrion membrane. The enzyme catalyses L-serine(in) = L-serine(out). Functionally, mitochondrial amino-acid transporter that mediates transport of serine into mitochondria. This is Sideroflexin-2 from Drosophila melanogaster (Fruit fly).